The following is a 545-amino-acid chain: MSPNKRILRAVYLSLFFIGIFMLLDDFLFSRKASSFMNEEIKFDLNKDFDIDNSLIDEDFTFNLSDNSEDINVDTDIYHATFATFGGNLISLKLKNHLNLDKKPTEIVKMHPQNQSLFYITLDKLSKSLFLYEQIDSHVHDFKTNVEVNGKYYEYIKRYTFSKSNEYLIKLEIFLNNIDVNDDIGIDFYKFVLNSGIEELSAKGKLQYNNYLSHAIYYDTKLRYGKDGLNIANPKWVGAGTKYFEVLVSKENMKVEFKHENKVLNAFILNKLDNKNVSDVFYIYAGPRDNKYLDIFNQRELNSFGLSNVEFGMSVEKSLLYFLQVPMQLIMQIFYNVIPNWGLSIMFLTIVVRILIFPLTFKSFRATAELSKLQPKMKEIQVKFKSDPKRLNEEMSKLYREEGVNPIGGCFPILLQLPVFFALYGLVNNFFVLRGASFIPGWIDDLSIGDSIYYFGYKVFAWTDIRILPFIMMITQLLSTIVSSNVSFKSLGAQQKFLYFGMPIMFFFILYDMPSGLLIYWITTNIFTILQQYYIKMNLSERRNK.

A run of 6 helical transmembrane segments spans residues 10-30 (AVYLSLFFIGIFMLLDDFLFS), 319-339 (LLYFLQVPMQLIMQIFYNVIP), 341-361 (WGLSIMFLTIVVRILIFPLTF), 407-427 (IGGCFPILLQLPVFFALYGLV), 467-487 (ILPFIMMITQLLSTIVSSNVS), and 502-522 (MPIMFFFILYDMPSGLLIYWI).

Belongs to the OXA1/ALB3/YidC family. Type 1 subfamily. Interacts with the Sec translocase complex via SecD. Specifically interacts with transmembrane segments of nascent integral membrane proteins during membrane integration.

It is found in the cell inner membrane. In terms of biological role, required for the insertion and/or proper folding and/or complex formation of integral membrane proteins into the membrane. Involved in integration of membrane proteins that insert both dependently and independently of the Sec translocase complex, as well as at least some lipoproteins. Aids folding of multispanning membrane proteins. The protein is Membrane protein insertase YidC of Borrelia duttonii (strain Ly).